Here is a 596-residue protein sequence, read N- to C-terminus: Alkaline phosphatase 4 (596 aa).

The N-terminal stretch at 1-20 (MHCLVILGFLLGSLVAFSWA) is a signal peptide. Aspartate 93 is a Mg(2+) binding site. Zn(2+) is bound at residue aspartate 93. Serine 144 serves as the catalytic Phosphoserine intermediate. Mg(2+)-binding residues include histidine 202 and threonine 204. N-linked (GlcNAc...) asparagine glycans are attached at residues asparagine 262 and asparagine 297. Glutamate 369 is a binding site for Mg(2+). 2 residues coordinate Zn(2+): aspartate 374 and histidine 378. The N-linked (GlcNAc...) asparagine glycan is linked to asparagine 401. Aspartate 415 and histidine 416 together coordinate Zn(2+). 2 N-linked (GlcNAc...) asparagine glycosylation sites follow: asparagine 464 and asparagine 470. Histidine 504 lines the Zn(2+) pocket. Cysteine 539 and cysteine 550 form a disulfide bridge. Over residues 548-566 (DSCEDHKDGQKDRPLDKPN) the composition is skewed to basic and acidic residues. Positions 548–570 (DSCEDHKDGQKDRPLDKPNPKRN) are disordered. A lipid anchor (GPI-anchor amidated asparagine) is attached at asparagine 570. A helical transmembrane segment spans residues 571–591 (GATVVGASLIPILTAATAAIL). Positions 571–596 (GATVVGASLIPILTAATAAILRGRGL) are cleaved as a propeptide — removed in mature form.

Belongs to the alkaline phosphatase family. In terms of assembly, homodimer. Requires Mg(2+) as cofactor. Zn(2+) serves as cofactor. Ellipsoid body ring neurons in the adult brain and in the lower Malpighian tubule and ureter.

Its subcellular location is the cell membrane. It catalyses the reaction a phosphate monoester + H2O = an alcohol + phosphate. In terms of biological role, important role in neural and renal epithelial function. The protein is Alkaline phosphatase 4 of Drosophila melanogaster (Fruit fly).